We begin with the raw amino-acid sequence, 473 residues long: Sulfate adenylyltransferase subunit 1 (473 aa).

Residues 19 to 238 enclose the tr-type G domain; the sequence is KTLLKFLTCG…IKIKNSISSE (220 aa). The segment at 28–35 is G1; that stretch reads GSVDDGKS. Residue 28 to 35 participates in GTP binding; that stretch reads GSVDDGKS. A G2 region spans residues 86–90; it reads GITID. The G3 stretch occupies residues 107-110; that stretch reads DTPG. GTP-binding positions include 107–111 and 162–165; these read DTPGH and NKMD. The segment at 162-165 is G4; it reads NKMD. The segment at 200–202 is G5; it reads SAL.

It belongs to the TRAFAC class translation factor GTPase superfamily. Classic translation factor GTPase family. CysN/NodQ subfamily. In terms of assembly, heterodimer composed of CysD, the smaller subunit, and CysN.

The catalysed reaction is sulfate + ATP + H(+) = adenosine 5'-phosphosulfate + diphosphate. The protein operates within sulfur metabolism; hydrogen sulfide biosynthesis; sulfite from sulfate: step 1/3. Functionally, with CysD forms the ATP sulfurylase (ATPS) that catalyzes the adenylation of sulfate producing adenosine 5'-phosphosulfate (APS) and diphosphate, the first enzymatic step in sulfur assimilation pathway. APS synthesis involves the formation of a high-energy phosphoric-sulfuric acid anhydride bond driven by GTP hydrolysis by CysN coupled to ATP hydrolysis by CysD. The chain is Sulfate adenylyltransferase subunit 1 from Buchnera aphidicola subsp. Acyrthosiphon pisum (strain Tuc7).